Here is a 70-residue protein sequence, read N- to C-terminus: Putative membrane protein insertion efficiency factor (70 aa).

It belongs to the UPF0161 family.

It localises to the cell membrane. Could be involved in insertion of integral membrane proteins into the membrane. The protein is Putative membrane protein insertion efficiency factor of Finegoldia magna (strain ATCC 29328 / DSM 20472 / WAL 2508) (Peptostreptococcus magnus).